We begin with the raw amino-acid sequence, 79 residues long: Putative membrane protein insertion efficiency factor (79 aa).

It belongs to the UPF0161 family.

Its subcellular location is the cell inner membrane. In terms of biological role, could be involved in insertion of integral membrane proteins into the membrane. This Synechocystis sp. (strain ATCC 27184 / PCC 6803 / Kazusa) protein is Putative membrane protein insertion efficiency factor.